A 137-amino-acid polypeptide reads, in one-letter code: Large ribosomal subunit protein uL16 (137 aa).

It belongs to the universal ribosomal protein uL16 family. As to quaternary structure, part of the 50S ribosomal subunit.

Binds 23S rRNA and is also seen to make contacts with the A and possibly P site tRNAs. The sequence is that of Large ribosomal subunit protein uL16 from Mycoplasma mycoides subsp. mycoides SC (strain CCUG 32753 / NCTC 10114 / PG1).